Reading from the N-terminus, the 288-residue chain is Putative branched-chain-amino-acid aminotransferase (288 aa).

Lys-146 carries the post-translational modification N6-(pyridoxal phosphate)lysine.

This sequence belongs to the class-IV pyridoxal-phosphate-dependent aminotransferase family. Pyridoxal 5'-phosphate serves as cofactor.

The catalysed reaction is L-leucine + 2-oxoglutarate = 4-methyl-2-oxopentanoate + L-glutamate. It carries out the reaction L-isoleucine + 2-oxoglutarate = (S)-3-methyl-2-oxopentanoate + L-glutamate. It catalyses the reaction L-valine + 2-oxoglutarate = 3-methyl-2-oxobutanoate + L-glutamate. Its pathway is amino-acid biosynthesis; L-isoleucine biosynthesis; L-isoleucine from 2-oxobutanoate: step 4/4. The protein operates within amino-acid biosynthesis; L-leucine biosynthesis; L-leucine from 3-methyl-2-oxobutanoate: step 4/4. It participates in amino-acid biosynthesis; L-valine biosynthesis; L-valine from pyruvate: step 4/4. Its function is as follows. Acts on leucine, isoleucine and valine. The protein is Putative branched-chain-amino-acid aminotransferase (ilvE) of Methanocaldococcus jannaschii (strain ATCC 43067 / DSM 2661 / JAL-1 / JCM 10045 / NBRC 100440) (Methanococcus jannaschii).